Consider the following 710-residue polypeptide: Choline transporter-like protein 4 (710 aa).

Over 1-34 (MGGKQRDEDDEAYGKPVKYDPSFRGPIKNRSCTD) the chain is Cytoplasmic. Residues 35–55 (VICCVLFLLFILGYIVVGIVA) traverse the membrane as a helical segment. At 56–229 (WLYGDPRQVL…KIFEDFAQSW (174 aa)) the chain is on the extracellular side. N-linked (GlcNAc...) asparagine glycosylation is found at N69, N155, and N197. The helical transmembrane segment at 230-250 (YWILVALGVALVLSLLFILLL) threads the bilayer. The Cytoplasmic portion of the chain corresponds to 251–252 (RL). Residues 253-273 (VAGPLVLVLILGVLGVLAYGI) traverse the membrane as a helical segment. Over 274 to 309 (YYCWEEYRVLRDKGASISQLGFTTNLSAYQSVQETW) the chain is Extracellular. N298 carries an N-linked (GlcNAc...) asparagine glycan. The chain crosses the membrane as a helical span at residues 310–330 (LAALIVLAVLEAILLLMLIFL). The Cytoplasmic portion of the chain corresponds to 331–358 (RQRIRIAIALLKEASKAVGQMMSTMFYP). The chain crosses the membrane as a helical span at residues 359-379 (LVTFVLLLICIAYWAMTALYL). Residues 380–455 (ATSGQPQYVL…GVLGLFWTLN (76 aa)) lie on the Extracellular side of the membrane. N-linked (GlcNAc...) asparagine glycans are attached at residues N393, N405, and N416. A helical transmembrane segment spans residues 456–476 (WVLALGQCVLAGAFASFYWAF). Residues 477 to 501 (HKPQDIPTFPLISAFIRTLRYHTGS) are Cytoplasmic-facing. Residues 502–522 (LAFGALILTLVQIARVILEYI) form a helical membrane-spanning segment. Over 523-560 (DHKLRGVQNPVARCIMCCFKCCLWCLEKFIKFLNRNAY) the chain is Extracellular. A helical transmembrane segment spans residues 561–581 (IMIAIYGKNFCVSAKNAFMLL). Residues 582-597 (MRNIVRVVVLDKVTDL) lie on the Cytoplasmic side of the membrane. Residues 598-618 (LLFFGKLLVVGGVGVLSFFFF) traverse the membrane as a helical segment. At 619 to 638 (SGRIPGLGKDFKSPHLNYYW) the chain is on the extracellular side. The helical transmembrane segment at 639–659 (LPIMTSILGAYVIASGFFSVF) threads the bilayer. Residues 660–710 (GMCVDTLFLCFLEDLERNNGSLDRPYYMSKSLLKILGKKNEAPPDNKKRKK) are Cytoplasmic-facing.

The protein belongs to the CTL (choline transporter-like) family. Post-translationally, N-glycosylated; N-glycosylation of Asn-69, Asn-155 and Asn-393 is required for a proper thiamine pyrophosphate uptake. In terms of tissue distribution, highly expressed in colon, also detected in prostate, trachea and lung. Isoform 3 is also expressed in colon but a lower levels. As to expression, expressed in colon at low levels.

Its subcellular location is the membrane. It is found in the apical cell membrane. It carries out the reaction choline(out) + n H(+)(in) = choline(in) + n H(+)(out). The enzyme catalyses thiamine diphosphate(out) = thiamine diphosphate(in). Choline transporter that plays a role in the choline-acetylcholine system and is required to the efferent innervation of hair cells in the olivocochlear bundle for the maintenance of physiological function of outer hair cells and the protection of hair cells from acoustic injury. Also described as a thiamine pyrophosphate transporter in colon, may mediate the absorption of microbiota-generated thiamine pyrophosphate and contribute to host thiamine (vitamin B1) homeostasis. Its function is as follows. Also has thiamine pyrophosphate transporter activity. The protein is Choline transporter-like protein 4 of Homo sapiens (Human).